Reading from the N-terminus, the 160-residue chain is Cytochrome c-type biogenesis protein CcmE (160 aa).

Topologically, residues 1 to 9 (MRGLKKKRR) are cytoplasmic. Residues 10–30 (IQIIAIAAVALTIATIMIGTA) traverse the membrane as a helical; Signal-anchor for type II membrane protein segment. At 31-160 (MRDGINFFRS…DGGYGGASGS (130 aa)) the chain is on the periplasmic side. Residues His123 and Tyr127 each coordinate heme. Residues 141–160 (VYKDPNATDADGGYGGASGS) are disordered.

This sequence belongs to the CcmE/CycJ family.

It is found in the cell inner membrane. In terms of biological role, heme chaperone required for the biogenesis of c-type cytochromes. Transiently binds heme delivered by CcmC and transfers the heme to apo-cytochromes in a process facilitated by CcmF and CcmH. In Dinoroseobacter shibae (strain DSM 16493 / NCIMB 14021 / DFL 12), this protein is Cytochrome c-type biogenesis protein CcmE.